The sequence spans 126 residues: 5-carboxymethyl-2-hydroxymuconate Delta-isomerase (126 aa).

P2 functions as the Proton acceptor; via imino nitrogen in the catalytic mechanism.

As to quaternary structure, homotrimer.

The catalysed reaction is (2E,4Z)-5-hydroxypenta-2,4-diene-1,2,5-tricarboxylate = (3E,5R)-5-carboxy-2-oxohept-3-enedioate. The protein operates within aromatic compound metabolism; 4-hydroxyphenylacetate degradation; pyruvate and succinate semialdehyde from 4-hydroxyphenylacetate: step 4/7. In terms of biological role, transforms 5-carboxymethyl-2-hydroxy-muconic acid (CHM) into 5-oxo-pent-3-ene-1,2,5-tricarboxylic acid (OPET). The sequence is that of 5-carboxymethyl-2-hydroxymuconate Delta-isomerase (hpcD) from Escherichia coli.